The chain runs to 126 residues: Large ribosomal subunit protein bL20 (126 aa).

The protein belongs to the bacterial ribosomal protein bL20 family.

Its function is as follows. Binds directly to 23S ribosomal RNA and is necessary for the in vitro assembly process of the 50S ribosomal subunit. It is not involved in the protein synthesizing functions of that subunit. This chain is Large ribosomal subunit protein bL20, found in Frankia casuarinae (strain DSM 45818 / CECT 9043 / HFP020203 / CcI3).